The sequence spans 373 residues: Glutamate 5-kinase (373 aa).

Position 15 (Lys-15) interacts with ATP. Positions 55, 142, and 154 each coordinate substrate. Residues 174-175 (TD) and 216-222 (TGGMATK) contribute to the ATP site. Residues 281 to 359 (AGSIVVDAGA…SEIERILGFR (79 aa)) form the PUA domain.

The protein belongs to the glutamate 5-kinase family.

It is found in the cytoplasm. The enzyme catalyses L-glutamate + ATP = L-glutamyl 5-phosphate + ADP. It functions in the pathway amino-acid biosynthesis; L-proline biosynthesis; L-glutamate 5-semialdehyde from L-glutamate: step 1/2. Its function is as follows. Catalyzes the transfer of a phosphate group to glutamate to form L-glutamate 5-phosphate. This chain is Glutamate 5-kinase, found in Geobacter sp. (strain M21).